We begin with the raw amino-acid sequence, 83 residues long: MDSADPQLNRFLQQLQAETQRQKFTEQVHTLTGRCWDVCFADYRPPSKMDGKTQTCIQNCVNRMIDASNFMVEHLSKMNGGHV.

Residues 35-60 carry the Twin CX3C motif motif; the sequence is CWDVCFADYRPPSKMDGKTQTCIQNC. Intrachain disulfides connect Cys35–Cys60 and Cys39–Cys56.

It belongs to the small Tim family. In terms of assembly, heterohexamer; composed of 3 copies of ddp-1/tim-8 and 3 copies of tin-13/tim-13, named soluble 70 kDa complex. Associates with the TIM22 complex, whose core is composed of tim-22.

The protein localises to the mitochondrion inner membrane. Mitochondrial intermembrane chaperone that participates in the import and insertion of some multi-pass transmembrane proteins into the mitochondrial inner membrane. Also required for the transfer of beta-barrel precursors from the TOM complex to the sorting and assembly machinery (SAM complex) of the outer membrane. Acts as a chaperone-like protein that protects the hydrophobic precursors from aggregation and guide them through the mitochondrial intermembrane space. The ddp-1/tim-8-tim-13 complex mediates the import of some proteins while the predominant tim-9/tin-9.1-tim-10/tin-10 70 kDa complex mediates the import of much more proteins. This Caenorhabditis elegans protein is Mitochondrial import inner membrane translocase subunit Tim8.